The following is a 1538-amino-acid chain: Dicer-like protein 1 (1538 aa).

Positions 39–72 (DPAESSADVHKDEHSSDNSDNDNEAVPKPNDFSQ) are disordered. The span at 45 to 55 (ADVHKDEHSSD) shows a compositional bias: basic and acidic residues. The Helicase ATP-binding domain maps to 134–315 (LFERAKTQNT…EAATRLETLL (182 aa)). 147 to 154 (LDTGSGKT) is a binding site for ATP. The short motif at 260–263 (DEAH) is the DEAH box element. Positions 460 to 619 (ELSKHFSDTT…ETLPEDRILH (160 aa)) constitute a Helicase C-terminal domain. A Dicer dsRNA-binding fold domain is found at 652-742 (AIAILARYAS…NSIYHRRLPA (91 aa)). Residues 892 to 1020 (DTVSFVHNND…ICAEPLRISA (129 aa)) enclose the PAZ domain. 2 consecutive RNase III domains span residues 1044 to 1203 (IALE…LSGG) and 1254 to 1406 (ARHV…VDSK). The Mg(2+) site is built by glutamate 1295, aspartate 1392, and glutamate 1395. Residues 1440-1508 (TFLHNKLTNE…SEKALAVLDG (69 aa)) enclose the DRBM domain. Positions 1452, 1479, 1520, and 1522 each coordinate Zn(2+).

Belongs to the helicase family. Dicer subfamily. The cofactor is Mg(2+). Requires Mn(2+) as cofactor.

Functionally, dicer-like endonuclease involved in cleaving double-stranded RNA in the RNA interference (RNAi) pathway. Produces 21 to 25 bp dsRNAs (siRNAs) which target the selective destruction of homologous RNAs leading to sequence-specific suppression of gene expression, called post-transcriptional gene silencing (PTGS). Part of a broad host defense response against viral infection and transposons. This Neosartorya fischeri (strain ATCC 1020 / DSM 3700 / CBS 544.65 / FGSC A1164 / JCM 1740 / NRRL 181 / WB 181) (Aspergillus fischerianus) protein is Dicer-like protein 1 (dcl1).